We begin with the raw amino-acid sequence, 144 residues long: Catabolic 3-dehydroquinase 1 (144 aa).

Tyrosine 24 functions as the Proton acceptor in the catalytic mechanism. 3 residues coordinate substrate: asparagine 75, histidine 81, and aspartate 88. The Proton donor role is filled by histidine 101. Residues 102–103 and arginine 112 each bind substrate; that span reads IS.

This sequence belongs to the type-II 3-dehydroquinase family. Homododecamer. Adopts a ring-like structure, composed of an arrangement of two hexameric rings stacked on top of one another.

The enzyme catalyses 3-dehydroquinate = 3-dehydroshikimate + H2O. It participates in aromatic compound metabolism; 3,4-dihydroxybenzoate biosynthesis; 3,4-dihydroxybenzoate from 3-dehydroquinate: step 1/2. Functionally, is involved in the catabolism of quinate. Allows the utilization of quinate as carbon source via the beta-ketoadipate pathway. This is Catabolic 3-dehydroquinase 1 from Fusarium vanettenii (strain ATCC MYA-4622 / CBS 123669 / FGSC 9596 / NRRL 45880 / 77-13-4) (Fusarium solani subsp. pisi).